The sequence spans 402 residues: MAYPGQGGHHYQSTHGGGGGGFPAPHGYAQPGYGYAPPSGPPQGYQSGGGYAPPMQPPPGGVQGQMGYGFAPPSGPIGPPEYATNHVNYNPQGGMIGNQRYEYSSMQGKRKALLIGINYFGQNGELRGCINDVRNVQNFLRQRGYKDDDMVVLTDDQRDARSIPTRQNMTAAMHWLVRGAQPGDALFFHYSGHGGQAKATQGDEADGYNETIIPLDYQQAGQIEDDELHAIMVRPLPVGCRLTAIFDSCHSGTALDLPYVYTTSGNVKEPNVIAGVGKGIMGAAMNYARGDVLGMAKGLFSTFTTAKNTSGAEEVTKQTRSSGADVVMLSGCKDSQTSADATEAGKATGACSFAFLSVMNQYPQLTYKQMLNAVRDVLASKYSQKPQLSSSHPIDMDLLFVV.

The tract at residues 1–79 (MAYPGQGGHH…FAPPSGPIGP (79 aa)) is disordered. The segment covering 23-45 (PAPHGYAQPGYGYAPPSGPPQGY) has biased composition (low complexity). Catalysis depends on residues His193 and Cys249.

The protein belongs to the peptidase C14B family.

Functionally, involved in cell death (apoptosis). This is Metacaspase-1 (MCA1) from Mycosarcoma maydis (Corn smut fungus).